Consider the following 384-residue polypeptide: Autophagy-related protein 25 (384 aa).

2 coiled-coil regions span residues 132-236 and 342-379; these read KETA…RRAS and KKNN…QWKT. The segment at 224 to 247 is disordered; that stretch reads ESRLSNMNKRRASPRDDAEAEPKR. The segment covering 236-247 has biased composition (basic and acidic residues); the sequence is SPRDDAEAEPKR.

Belongs to the ADIP family.

The protein localises to the preautophagosomal structure membrane. Functionally, specifically required for selective degradation of peroxisomes via macropexophagy. In Pichia angusta (Yeast), this protein is Autophagy-related protein 25 (ATG25).